We begin with the raw amino-acid sequence, 322 residues long: DNA primase small subunit PriS (322 aa).

Active-site residues include Asp-100, Asp-102, and Asp-228.

The protein belongs to the eukaryotic-type primase small subunit family. As to quaternary structure, heterodimer of a small subunit (PriS) and a large subunit (PriL). Mg(2+) serves as cofactor. It depends on Mn(2+) as a cofactor.

In terms of biological role, catalytic subunit of DNA primase, an RNA polymerase that catalyzes the synthesis of short RNA molecules used as primers for DNA polymerase during DNA replication. The small subunit contains the primase catalytic core and has DNA synthesis activity on its own. Binding to the large subunit stabilizes and modulates the activity, increasing the rate of DNA synthesis while decreasing the length of the DNA fragments, and conferring RNA synthesis capability. The DNA polymerase activity may enable DNA primase to also catalyze primer extension after primer synthesis. May also play a role in DNA repair. The chain is DNA primase small subunit PriS from Sulfolobus acidocaldarius (strain ATCC 33909 / DSM 639 / JCM 8929 / NBRC 15157 / NCIMB 11770).